Consider the following 552-residue polypeptide: Serine/threonine-protein kinase RIO2 (552 aa).

Residues 97-272 form the Protein kinase domain; it reads VGNQMGVGKE…DRDVKCIKDF (176 aa). Residue Lys-123 coordinates ATP. The active-site Proton acceptor is Asp-228. A phosphoserine mark is found at Ser-332, Ser-335, Ser-337, Ser-350, Ser-362, Ser-380, Ser-382, Ser-385, and Ser-390. The Nuclear export signal signature appears at 399-408; it reads ALEEIKGQVV. Phosphoserine occurs at positions 412, 417, and 442. Residue Tyr-445 is modified to Phosphotyrosine. Position 548 is a phosphoserine (Ser-548).

This sequence belongs to the protein kinase superfamily. RIO-type Ser/Thr kinase family. Associated with late 40S pre-ribosomal particles. Interacts with PLK1 (via its N-terminus). Mg(2+) serves as cofactor. Autophosphorylated (in vitro). Phosphorylation at Ser-335, Ser-380, Ser-548 by PLK1 affects the timing of the metaphase-anaphase transition.

It localises to the cytoplasm. It catalyses the reaction L-seryl-[protein] + ATP = O-phospho-L-seryl-[protein] + ADP + H(+). The catalysed reaction is L-threonyl-[protein] + ATP = O-phospho-L-threonyl-[protein] + ADP + H(+). Its function is as follows. Serine/threonine-protein kinase involved in the final steps of cytoplasmic maturation of the 40S ribosomal subunit. Involved in export of the 40S pre-ribosome particles (pre-40S) from the nucleus to the cytoplasm. Its kinase activity is required for the release of NOB1, PNO1 and LTV1 from the late pre-40S and the processing of 18S-E pre-rRNA to the mature 18S rRNA. Regulates the timing of the metaphase-anaphase transition during mitotic progression, and its phosphorylation, most likely by PLK1, regulates this function. The chain is Serine/threonine-protein kinase RIO2 from Homo sapiens (Human).